Reading from the N-terminus, the 283-residue chain is Bifunctional protein FolD (283 aa).

NADP(+)-binding positions include 166–168, Ser-191, and Ile-232; that span reads GAS.

The protein belongs to the tetrahydrofolate dehydrogenase/cyclohydrolase family. As to quaternary structure, homodimer.

The catalysed reaction is (6R)-5,10-methylene-5,6,7,8-tetrahydrofolate + NADP(+) = (6R)-5,10-methenyltetrahydrofolate + NADPH. The enzyme catalyses (6R)-5,10-methenyltetrahydrofolate + H2O = (6R)-10-formyltetrahydrofolate + H(+). It functions in the pathway one-carbon metabolism; tetrahydrofolate interconversion. Its function is as follows. Catalyzes the oxidation of 5,10-methylenetetrahydrofolate to 5,10-methenyltetrahydrofolate and then the hydrolysis of 5,10-methenyltetrahydrofolate to 10-formyltetrahydrofolate. The chain is Bifunctional protein FolD from Chromobacterium violaceum (strain ATCC 12472 / DSM 30191 / JCM 1249 / CCUG 213 / NBRC 12614 / NCIMB 9131 / NCTC 9757 / MK).